A 407-amino-acid chain; its full sequence is Frizzled/smoothened-like sans CRD protein J (407 aa).

The signal sequence occupies residues 1–23 (MKFLFSVILVIISFLGISKIVNG). At 24–89 (QIACPSPFLY…WNSFNKLVKQ (66 aa)) the chain is on the extracellular side. The N-linked (GlcNAc...) asparagine glycan is linked to Asn37. The chain crosses the membrane as a helical span at residues 90 to 110 (MGAVAFTCSAIIMIIYGPLMN). Residues 111 to 120 (RSFFKFDRHT) are Cytoplasmic-facing. The helical transmembrane segment at 121-141 (ITVFCFALSTFFIGVSDLMFA) threads the bilayer. Residues 142–169 (TNDVDMVCPESHRYARQTDKTCATNGVL) are Extracellular-facing. A helical membrane pass occupies residues 170–190 (FQFGWLGSVMWFAFLSIDGFF). Over 191 to 199 (RASGKKMNK) the chain is Cytoplasmic. A helical transmembrane segment spans residues 200-220 (IAFAIVLASIWILNIVLSFAP). The Extracellular segment spans residues 221–246 (MGGDQYGAYFVGQVNCWILVKNWQYA). A helical membrane pass occupies residues 247 to 267 (FFWAELIVSLAIGFVGICLTI). The Cytoplasmic portion of the chain corresponds to 268 to 285 (YSLIRKTSDGNTLKHVTP). The chain crosses the membrane as a helical span at residues 286–306 (LILVFLLFCQYLYMIIFYGII). Residues 307–354 (NEKKDHYQNILAEQVGCIFNNALAKMKVPGIVYAGECTFNETITFSSQ) lie on the Extracellular side of the membrane. Asn346 is a glycosylation site (N-linked (GlcNAc...) asparagine). A helical transmembrane segment spans residues 355 to 375 (YAFLFFVRLLGIEIFAFYLFS). At 376-407 (KETLLLIKSSYIATMFGLGDKDAYDVELEETD) the chain is on the cytoplasmic side.

It belongs to the G-protein coupled receptor Fz/Smo family.

It localises to the membrane. The protein is Frizzled/smoothened-like sans CRD protein J (fscJ) of Dictyostelium discoideum (Social amoeba).